The sequence spans 356 residues: Peptide chain release factor 1 (356 aa).

Residue Gln232 is modified to N5-methylglutamine.

It belongs to the prokaryotic/mitochondrial release factor family. Methylated by PrmC. Methylation increases the termination efficiency of RF1.

Its subcellular location is the cytoplasm. Functionally, peptide chain release factor 1 directs the termination of translation in response to the peptide chain termination codons UAG and UAA. The protein is Peptide chain release factor 1 of Thermoanaerobacter pseudethanolicus (strain ATCC 33223 / 39E) (Clostridium thermohydrosulfuricum).